The chain runs to 78 residues: Small venom protein 2 (78 aa).

The signal sequence occupies residues 1–19 (MKFIVLLGALLALLVAVSA). Residues 20 to 42 (DRIAREAPEMESVDEAVLTRQAR) constitute a propeptide that is removed on maturation.

Expressed by the venom gland.

The protein resides in the secreted. The polypeptide is Small venom protein 2 (Pimpla hypochondriaca (Parasitoid wasp)).